The primary structure comprises 3946 residues: Hybrid PKS-NRPS synthetase lepA (3946 aa).

One can recognise a Ketosynthase family 3 (KS3) domain in the interval 9-440 (VEPIAIVGSA…GTNAHVILEG (432 aa)). Active-site for beta-ketoacyl synthase activity residues include Cys183, His320, and His363. A malonyl-CoA:ACP transacylase (MAT) domain region spans residues 553–871 (IFTGQGAQWA…PYAGIMRRAT (319 aa)). The interval 945-1073 (HELLGRRAPD…GRLILFKGEG (129 aa)) is N-terminal hotdog fold. The tract at residues 945 to 1238 (HELLGRRAPD…RLQSFTEAKA (294 aa)) is dehydratase (DH) domain. A PKS/mFAS DH domain is found at 945–1239 (HELLGRRAPD…LQSFTEAKAL (295 aa)). Catalysis depends on His977, which acts as the Proton acceptor; for dehydratase activity. Residues 1088 to 1239 (LSPLDREMFY…LQSFTEAKAL (152 aa)) are C-terminal hotdog fold. The Proton donor; for dehydratase activity role is filled by Asp1147. Positions 1380 to 1580 (LLNRFYTDGR…ATVSDLPSDG (201 aa)) are methyltransferase (MT) domain. Residues 2093–2266 (TYWMIGLNSE…AASVIDIGLV (174 aa)) form a ketoreductase (KR) domain region. Positions 2352–2365 (SSQDSDQSNSTSAS) are enriched in low complexity. The interval 2352-2372 (SSQDSDQSNSTSASIRDQVSS) is disordered. The Carrier 1 domain occupies 2378-2455 (EGTDVLLRCF…EICAEAIQKF (78 aa)). Ser2415 bears the O-(pantetheine 4'-phosphoryl)serine mark. The interval 2474-2531 (KQATASPPEIGREEAQSTSRAGILPTDQDNDNSSDSESQRKSGASSSSGSGTRTPTSI) is disordered. Low complexity predominate over residues 2508 to 2530 (DSESQRKSGASSSSGSGTRTPTS). The segment at 2547-2976 (PMSYAQSRLW…MQIQDGLLND (430 aa)) is condensation (C) domain. Residues 3000–3402 (FSQRAATDAN…GGLIFMGRLD (403 aa)) form an adenylation (A) (KR) domain region. Residues 3492–3511 (GKVDRKALQDKPLPTEPDSS) form a disordered region. The Carrier 2 domain occupies 3515–3594 (EALSLAEGEL…RMATLIDAEK (80 aa)). Ser3554 bears the O-(pantetheine 4'-phosphoryl)serine mark. The interval 3633-3833 (LTGSTGFLGM…RFSVLMKVVP (201 aa)) is reductase (RED) domain.

It in the C-terminal section; belongs to the NRP synthetase family.

Its function is as follows. Hybrid PKS-NRPS synthetase; part of the gene cluster 23 that mediates the biosynthesis of a family of 2-pyridones known as leporins. The hybrid PKS-NRPS synthetase lepA and the enoyl reductase lepG are responsible for fusion of phenylalanine with a hexaketide and subsequent release of the stable tetramic acid precursor, pre-leporin C. Because lepA lacks a designated enoylreductase (ER) domain, the required activity is provided the enoyl reductase lepG. It is possible that the dehydrogenase lepF also participates in production of pre-leporin C. Cytochrome P450 monooxygenase lepH is then required for the ring expansion step to yield leporin C. Leporin C is then presumably further oxidized by the N-hydroxylase lepD to form leporin B. LepI may possess a function in biosynthesis upstream of lepA. Leporin B is further oxidized in the presence of ferric ion to give the leporin B trimer-iron chelate, but whether or not this reaction is catalyzed by an enzyme in the pathway or by ferric ion is not determined yet. The polypeptide is Hybrid PKS-NRPS synthetase lepA (Aspergillus flavus (strain ATCC 200026 / FGSC A1120 / IAM 13836 / NRRL 3357 / JCM 12722 / SRRC 167)).